The sequence spans 174 residues: CASP-like protein 1 (174 aa).

The segment at 1–25 (MDSKSGRSESAINIPESNSTKHKST) is disordered. The Cytoplasmic segment spans residues 1 to 46 (MDSKSGRSESAINIPESNSTKHKSTAVHTATKVAAVAPRGGGWRRG). The span at 8–18 (SESAINIPESN) shows a compositional bias: polar residues. A helical membrane pass occupies residues 47–67 (VSIFDFILRICALAAALAATA). Over 68–96 (TMGTTDQTLPFFTQIIQFQASYDDLPVFT) the chain is Extracellular. Residues 97–117 (FFVVANGIASGYLVLSLPFSI) traverse the membrane as a helical segment. Over 118-119 (AT) the chain is Cytoplasmic. Residues 120-139 (IVRPHAAAIKLLLIIFDTQF) form a helical membrane-spanning segment. The Extracellular segment spans residues 140 to 150 (NDFCQRVSGAV). A helical membrane pass occupies residues 151–171 (VASFVAAVILIFLVVLSAVAI). Over 172 to 174 (RKH) the chain is Cytoplasmic.

It belongs to the Casparian strip membrane proteins (CASP) family. In terms of assembly, homodimer and heterodimers.

The protein resides in the cell membrane. This chain is CASP-like protein 1, found in Triphysaria pusilla (Dwarf owl's-clover).